The sequence spans 479 residues: Aspartyl/glutamyl-tRNA(Asn/Gln) amidotransferase subunit B (479 aa).

The protein belongs to the GatB/GatE family. GatB subfamily. Heterotrimer of A, B and C subunits.

The catalysed reaction is L-glutamyl-tRNA(Gln) + L-glutamine + ATP + H2O = L-glutaminyl-tRNA(Gln) + L-glutamate + ADP + phosphate + H(+). It carries out the reaction L-aspartyl-tRNA(Asn) + L-glutamine + ATP + H2O = L-asparaginyl-tRNA(Asn) + L-glutamate + ADP + phosphate + 2 H(+). Functionally, allows the formation of correctly charged Asn-tRNA(Asn) or Gln-tRNA(Gln) through the transamidation of misacylated Asp-tRNA(Asn) or Glu-tRNA(Gln) in organisms which lack either or both of asparaginyl-tRNA or glutaminyl-tRNA synthetases. The reaction takes place in the presence of glutamine and ATP through an activated phospho-Asp-tRNA(Asn) or phospho-Glu-tRNA(Gln). The sequence is that of Aspartyl/glutamyl-tRNA(Asn/Gln) amidotransferase subunit B from Streptococcus pyogenes serotype M28 (strain MGAS6180).